Reading from the N-terminus, the 670-residue chain is MWDGFSNSFWSRDYITGINRAQRLINEGVEQNEKLLQLLHIRAKSASSCSDLLFKSFSKFNKHHPLNEESNDLPSDAAIHQLYESYLMEASLHKKLGEQLNILVINPFANWSKKYSRRVDEIVSAAIVKINNYNSRFSHVNSKKSNLTDRKPIPTSRKSNKSDSLASALSQLDINPSNVNKFDGLINIVDHPYTAEEFANVLLKLMKASTVKRKSYSHLGDYELVTNCSLLFEAIKTTFGLEKDSYVVKAGNQLIQHGLIRLLGIRRVFENDPEIDAQFTTKSQQLLKSYHLSILEVDPYFQVNDPITATNDDPVLQKYNLAYDNLEQCRHELELYLFMVFKDLEQAELDRLNAVKSVLVECSNYSGNFIPSLNSIFIDNLNSFKNLDSLRDMSTQINKHYTGYFIPVSNNELSTKDEYLFLQKSSLTEDNLIVSLVPKILAYLLDAYSYERDEEVLSCVWTTEVPLKDAFDLKSVLRKTDNVESVLNACVEKYTLSSITCSLRLCLLEFPDSLIRSSFYDYFKAIYTTYTDFEDLDHRLYSIKKCLLHLHSTPLHILEEIIRHLSAYAISIRMKDGQIRHLAKIISPCVLRPPDDLNIIPVEDTHPTLLVIDLINEFENLFADLERPSTPPVEIERALTPITTSPQKLKLPRSSSPCKNPSPTRRFRPF.

Residues 3 to 392 (DGFSNSFWSR…SFKNLDSLRD (390 aa)) enclose the F-BAR domain. Residues 141–161 (NSKKSNLTDRKPIPTSRKSNK) are disordered. The Rho-GAP domain occupies 425–622 (SSLTEDNLIV…DLINEFENLF (198 aa)). The residue at position 640 (Thr640) is a Phosphothreonine. Residues 641–663 (PITTSPQKLKLPRSSSPCKNPSP) are compositionally biased toward polar residues. The interval 641–670 (PITTSPQKLKLPRSSSPCKNPSPTRRFRPF) is disordered. Ser645 carries the post-translational modification Phosphoserine.

The protein resides in the cytoplasm. In Schizosaccharomyces pombe (strain 972 / ATCC 24843) (Fission yeast), this protein is Probable Rho-GTPase-activating protein 9 (rga9).